We begin with the raw amino-acid sequence, 486 residues long: Protein hold'em (486 aa).

The segment at residues Ile166–Ala285 is a DNA-binding region (OB).

The protein belongs to the MEIOB family. In terms of assembly, interacts with mei-9 and Ercc1.

Its function is as follows. Single-stranded DNA-binding protein required for meiosis. May be involved in the resolution of recombination intermediates into crossovers in the meiotic recombination pathway. This chain is Protein hold'em (hdm), found in Drosophila melanogaster (Fruit fly).